We begin with the raw amino-acid sequence, 216 residues long: Somatotropin (216 aa).

A signal peptide spans 1–25 (MAPGSWFSPLLIAVVTLGLPQGAAA). A Zn(2+)-binding site is contributed by H45. A disulfide bridge connects residues C78 and C189. E198 lines the Zn(2+) pocket. Cysteines 206 and 214 form a disulfide.

Belongs to the somatotropin/prolactin family. Pituitary gland.

It is found in the secreted. Its function is as follows. Growth hormone plays an important role in growth control. The polypeptide is Somatotropin (GH) (Meleagris gallopavo (Wild turkey)).